The primary structure comprises 414 residues: Gamma-glutamyl phosphate reductase (414 aa).

It belongs to the gamma-glutamyl phosphate reductase family.

The protein localises to the cytoplasm. The catalysed reaction is L-glutamate 5-semialdehyde + phosphate + NADP(+) = L-glutamyl 5-phosphate + NADPH + H(+). The protein operates within amino-acid biosynthesis; L-proline biosynthesis; L-glutamate 5-semialdehyde from L-glutamate: step 2/2. Functionally, catalyzes the NADPH-dependent reduction of L-glutamate 5-phosphate into L-glutamate 5-semialdehyde and phosphate. The product spontaneously undergoes cyclization to form 1-pyrroline-5-carboxylate. The sequence is that of Gamma-glutamyl phosphate reductase from Thermoanaerobacter pseudethanolicus (strain ATCC 33223 / 39E) (Clostridium thermohydrosulfuricum).